A 314-amino-acid polypeptide reads, in one-letter code: Ribonuclease Z (314 aa).

The Zn(2+) site is built by His62, His64, Asp66, His67, His144, Asp215, and His273. Residue Asp66 is the Proton acceptor of the active site.

Belongs to the RNase Z family. As to quaternary structure, homodimer. It depends on Zn(2+) as a cofactor.

It catalyses the reaction Endonucleolytic cleavage of RNA, removing extra 3' nucleotides from tRNA precursor, generating 3' termini of tRNAs. A 3'-hydroxy group is left at the tRNA terminus and a 5'-phosphoryl group is left at the trailer molecule.. In terms of biological role, zinc phosphodiesterase, which displays some tRNA 3'-processing endonuclease activity. Probably involved in tRNA maturation, by removing a 3'-trailer from precursor tRNA. The chain is Ribonuclease Z from Prochlorococcus marinus (strain NATL1A).